A 228-amino-acid polypeptide reads, in one-letter code: Thermonuclease (228 aa).

The N-terminal stretch at Met1–Ala23 is a signal peptide. Positions Ile24–Ala60 are excised as a propeptide. Residues Ala58 to Ser70 show a composition bias toward polar residues. The segment at Ala58–Thr83 is disordered. Residue Asp100 coordinates Ca(2+). The active site involves Arg114. Residues Asp119 and Thr120 each coordinate Ca(2+). Catalysis depends on residues Glu122 and Arg166.

This sequence belongs to the thermonuclease family. Requires Ca(2+) as cofactor.

The protein localises to the secreted. The catalysed reaction is Endonucleolytic cleavage to nucleoside 3'-phosphates and 3'-phosphooligonucleotide end-products.. Enzyme that catalyzes the hydrolysis of both DNA and RNA at the 5' position of the phosphodiester bond. The protein is Thermonuclease (nuc) of Staphylococcus aureus (strain COL).